Consider the following 408-residue polypeptide: Indian hedgehog protein (408 aa).

A signal peptide spans 1–23; that stretch reads MKPARLLLLLSGCALLLAPAVRC. The N-palmitoyl cysteine moiety is linked to residue cysteine 24. The Ca(2+) site is built by glutamate 90, glutamate 91, aspartate 96, threonine 126, glutamate 127, aspartate 130, and aspartate 132. Zn(2+)-binding residues include histidine 141, aspartate 148, and histidine 183. Glycine 198 carries the Cholesterol glycine ester lipid modification.

The protein belongs to the hedgehog family. As to quaternary structure, multimer. Interacts with BOC and CDON. Interacts with PTCH1. Interacts with glypican GPC3. Cholesterylation is required for N-product targeting to lipid rafts and multimerization. In terms of processing, the C-terminal domain displays an autoproteolysis activity and a cholesterol transferase activity. Both activities result in the cleavage of the full-length protein and covalent attachment of a cholesterol moiety to the C-terminal of the newly generated N-product. The N-product is the active species in both local and long-range signaling, whereas the C-product is degraded in the endoplasmic reticulum. Post-translationally, N-palmitoylation by HHAT of N-product is required for indian hedgehog protein N-product multimerization and full activity. In terms of tissue distribution, expressed in developing midgut, lung and cartilage of developing long bones in the limb.

The protein localises to the cell membrane. It localises to the endoplasmic reticulum membrane. Its subcellular location is the golgi apparatus membrane. The protein resides in the secreted. It carries out the reaction glycyl-L-cysteinyl-[protein] + cholesterol + H(+) = [protein]-C-terminal glycyl cholesterol ester + N-terminal L-cysteinyl-[protein]. Functionally, plays a role in embryonic morphogenesis; it is involved in the regulation of endochondral skeleton formation, and the development of retinal pigment epithelium (RPE), photoreceptors and periocular tissues. In terms of biological role, the C-terminal part of the indian hedgehog protein precursor displays an autoproteolysis and a cholesterol transferase activity. Both activities result in the cleavage of the full-length protein into two parts followed by the covalent attachment of a cholesterol moiety to the C-terminal of the newly generated N-product. Both activities occur in the endoplasmic reticulum. Its function is as follows. The dually lipidated indian hedgehog protein N-product is a morphogen which is essential for a variety of patterning events during development. Binds to the patched (PTCH1) receptor, which functions in association with smoothened (SMO), to activate the transcription of target genes. Plays a role in morphogenesis of the skeleton by coordinating growth and differentiation of the endochondral skeleton. Positively regulates PTHLH expression during endochondral bone formation preventing chondrocyte hypertrophy. In contrast, participates in normal chondrocyte proliferation in a PTHLH-independent pathway. This Gallus gallus (Chicken) protein is Indian hedgehog protein.